Here is a 652-residue protein sequence, read N- to C-terminus: Probable serine/threonine-protein kinase mkcD (652 aa).

Disordered stretches follow at residues 1–47, 163–198, and 257–289; these read MNNI…RKNK, NPID…LTNV, and QQKL…TLSP. Positions 182 to 191 are enriched in gly residues; it reads NGGGSGGGGD. The stretch at 231–275 forms a coiled coil; that stretch reads KNNQNLHHKQQQLQQLQQLKQQHLQQQQKLKQEQQQEQQQQQEDE. Residues 257–271 show a composition bias toward low complexity; sequence QQKLKQEQQQEQQQQ. The segment covering 279 to 289 has biased composition (polar residues); that stretch reads SPVSTSSTLSP. The Protein kinase domain maps to 369–626; that stretch reads FKNLDFEARG…SSQLLQHPFL (258 aa). Residues 375 to 383 and lysine 403 contribute to the ATP site; that span reads EARGGFGSV. The active-site Proton acceptor is aspartate 494.

Belongs to the protein kinase superfamily. STE Ser/Thr protein kinase family. STE20 subfamily. Mg(2+) serves as cofactor.

The catalysed reaction is L-seryl-[protein] + ATP = O-phospho-L-seryl-[protein] + ADP + H(+). The enzyme catalyses L-threonyl-[protein] + ATP = O-phospho-L-threonyl-[protein] + ADP + H(+). The sequence is that of Probable serine/threonine-protein kinase mkcD from Dictyostelium discoideum (Social amoeba).